A 131-amino-acid polypeptide reads, in one-letter code: Histone H2B (131 aa).

Positions Met-1–Pro-19 are enriched in basic and acidic residues. The segment at Met-1–Arg-38 is disordered. Residues Lys-7 and Lys-8 each carry the N6-acetyllysine; alternate modification. Glycyl lysine isopeptide (Lys-Gly) (interchain with G-Cter in SUMO); alternate cross-links involve residues Lys-7 and Lys-8. A Phosphoserine modification is found at Ser-11. At Lys-12 the chain carries N6-acetyllysine. Lys-17 carries the post-translational modification N6-acetyllysine; alternate. Lys-17 participates in a covalent cross-link: Glycyl lysine isopeptide (Lys-Gly) (interchain with G-Cter in SUMO); alternate. A Glycyl lysine isopeptide (Lys-Gly) (interchain with G-Cter in SUMO) cross-link involves residue Lys-18. Lys-125 participates in a covalent cross-link: Glycyl lysine isopeptide (Lys-Gly) (interchain with G-Cter in ubiquitin).

It belongs to the histone H2B family. The nucleosome is a histone octamer containing two molecules each of H2A, H2B, H3 and H4 assembled in one H3-H4 heterotetramer and two H2A-H2B heterodimers. The octamer wraps approximately 147 bp of DNA. In terms of processing, monoubiquitinated by the UBC2-BRE1 complex to form H2BK123ub1. H2BK123ub1 gives a specific tag for epigenetic transcriptional activation and is also prerequisite for H3K4me and H3K79me formation. H2BK123ub1 also modulates the formation of double-strand breaks during meiosis and is a prerequisite for DNA-damage checkpoint activation. Phosphorylated by STE20 to form H2BS10ph during progression through meiotic prophase. May be correlated with chromosome condensation. Post-translationally, acetylated by GCN5 to form H2BK11ac and H2BK16ac. H2BK16ac can also be formed by ESA1. Acetylation of N-terminal lysines and particularly formation of H2BK11acK16ac has a positive effect on transcription. In terms of processing, sumoylation to form H2BK6su or H2BK7su, and probably also H2BK16su or H2BK17su, occurs preferentially near the telomeres and represses gene transcription.

Its subcellular location is the nucleus. The protein localises to the chromosome. Core component of nucleosome. Nucleosomes wrap and compact DNA into chromatin, limiting DNA accessibility to the cellular machineries which require DNA as a template. Histones thereby play a central role in transcription regulation, DNA repair, DNA replication and chromosomal stability. DNA accessibility is regulated via a complex set of post-translational modifications of histones, also called histone code, and nucleosome remodeling. In Lodderomyces elongisporus (strain ATCC 11503 / CBS 2605 / JCM 1781 / NBRC 1676 / NRRL YB-4239) (Yeast), this protein is Histone H2B (HTB1).